Reading from the N-terminus, the 341-residue chain is Phenylalanine--tRNA ligase alpha subunit (341 aa).

E254 provides a ligand contact to Mg(2+).

Belongs to the class-II aminoacyl-tRNA synthetase family. Phe-tRNA synthetase alpha subunit type 1 subfamily. Tetramer of two alpha and two beta subunits. The cofactor is Mg(2+).

The protein resides in the cytoplasm. It catalyses the reaction tRNA(Phe) + L-phenylalanine + ATP = L-phenylalanyl-tRNA(Phe) + AMP + diphosphate + H(+). In Chlorobium limicola (strain DSM 245 / NBRC 103803 / 6330), this protein is Phenylalanine--tRNA ligase alpha subunit.